Reading from the N-terminus, the 100-residue chain is Large ribosomal subunit protein uL23 (100 aa).

This sequence belongs to the universal ribosomal protein uL23 family. As to quaternary structure, part of the 50S ribosomal subunit. Contacts protein L29, and trigger factor when it is bound to the ribosome.

Functionally, one of the early assembly proteins it binds 23S rRNA. One of the proteins that surrounds the polypeptide exit tunnel on the outside of the ribosome. Forms the main docking site for trigger factor binding to the ribosome. The chain is Large ribosomal subunit protein uL23 from Synechococcus elongatus (strain ATCC 33912 / PCC 7942 / FACHB-805) (Anacystis nidulans R2).